Reading from the N-terminus, the 296-residue chain is MNNNVFHFPVLLDAICKLIEDLPVKSDLIYIDSTLGEGAHAKAILEKYDFLSLVGIERDPQILERAKQFLFAFKGRITYFNDWFDNFFVNYPLNAKANFILVDLGISMFHYKGSKKGFSFLEDEPLDMRLCSSSCSISAADIVNTFSKYDLESLIYDLSNEHYSRRISKAIVEYRKIKRIETTKELQAVINKVYPFSKAKINPATKTFQALRICVNDELARLKRSLPLWIENLAKDGILAIITFHSIEDRIVKDFFRSLSCDLYAKISKKPIIPSFDEIKKNKPSRSAKLRALKKI.

S-adenosyl-L-methionine-binding positions include 38–40, glutamate 57, phenylalanine 80, aspartate 103, and histidine 110; that span reads GAH.

It belongs to the methyltransferase superfamily. RsmH family.

It is found in the cytoplasm. It catalyses the reaction cytidine(1402) in 16S rRNA + S-adenosyl-L-methionine = N(4)-methylcytidine(1402) in 16S rRNA + S-adenosyl-L-homocysteine + H(+). Functionally, specifically methylates the N4 position of cytidine in position 1402 (C1402) of 16S rRNA. The polypeptide is Ribosomal RNA small subunit methyltransferase H (Borrelia garinii subsp. bavariensis (strain ATCC BAA-2496 / DSM 23469 / PBi) (Borreliella bavariensis)).